We begin with the raw amino-acid sequence, 313 residues long: Ras-related GTP-binding protein A (313 aa).

GTP-binding residues include serine 16, glycine 17, glycine 19, lysine 20, threonine 21, serine 22, threonine 36, threonine 42, glycine 65, and histidine 127. The GDP site is built by glycine 17, glycine 19, lysine 20, threonine 21, and serine 22. Positions 127 and 130 each coordinate GDP. Lysine 142 participates in a covalent cross-link: Glycyl lysine isopeptide (Lys-Gly) (interchain with G-Cter in ubiquitin). Residues leucine 148 and isoleucine 164 each coordinate GDP. Isoleucine 164 lines the GTP pocket. Glycyl lysine isopeptide (Lys-Gly) (interchain with G-Cter in ubiquitin) cross-links involve residues lysine 220, lysine 230, and lysine 244. Serine 309 is subject to Phosphoserine.

This sequence belongs to the GTR/RAG GTP-binding protein family. In terms of assembly, can occur as a homodimer or as a heterodimer with RRAGC or RRAGD in a sequence-independent manner; heterodimerization stabilizes proteins of the heterodimer. The GTP-bound form of RRAGA (in complex with the GDP-bound form of RRAGC or RRAGD) interacts with RPTOR, thereby promoting recruitment of mTORC1 to the lysosomes. The Rag heterodimer interacts with SLC38A9; the probable amino acid sensor. The Rag heterodimer interacts with the Ragulator complex. The GTP-bound form of RRAGA interacts with NOL8. Component of the lysosomal folliculin complex (LFC), composed of FLCN, FNIP1 (or FNIP2), RagA/RRAGA or RagB/RRAGB GDP-bound, RagC/RRAGC or RagD/RRAGD GTP-bound, and Ragulator. Interacts with SH3BP4; the interaction with this negative regulator is most probably direct, preferentially occurs with the inactive GDP-bound form of RRAGA and is negatively regulated by amino acids. Interacts (polyubiquitinated) with TSC2. Interacts with SESN1, SESN2 and SESN3. Interacts with PIP4P1. Interacts with GPR137B. Interacts with WDR83; this interaction regulates the spatiotemporal localization of mTORC1 to the lysosomal surface. Polybiquitinated via 'Lys-63'-linked polyubiquitination by RNF152 in response to amino acid starvation: polyubiquitination of the GDP-bound inactive form by RNF152 promotes RRAGA inactivation and interaction with the GATOR1 complex. This does not affect RRAGA degradation.

It is found in the cytoplasm. It localises to the nucleus. The protein resides in the lysosome membrane. The enzyme catalyses GTP + H2O = GDP + phosphate + H(+). With respect to regulation, the activation of GTP-binding proteins is generally mediated by a guanine exchange factor (GEF), while inactivation through hydrolysis of bound GTP is catalyzed by a GTPase activating protein (GAP). The Ragulator complex functions as a GEF and promotes the active GTP-bound form. The GATOR1 complex functions as a GAP and stimulates RRAGA GTPase activity to turn it into its inactive GDP-bound form, preventing mTORC1 recruitment and activation. Functionally, guanine nucleotide-binding protein that plays a crucial role in the cellular response to amino acid availability through regulation of the mTORC1 signaling cascade. Forms heterodimeric Rag complexes with RagC/RRAGC or RagD/RRAGD and cycles between an inactive GDP-bound and an active GTP-bound form: RagA/RRAGA is in its active form when GTP-bound RagA/RRAGA forms a complex with GDP-bound RagC/RRAGC (or RagD/RRAGD) and in an inactive form when GDP-bound RagA/RRAGA heterodimerizes with GTP-bound RagC/RRAGC (or RagD/RRAGD). In its GTP-bound active form, promotes the recruitment of mTORC1 to the lysosomes and its subsequent activation by the GTPase RHEB. Involved in the RCC1/Ran-GTPase pathway. May play a direct role in a TNF-alpha signaling pathway leading to induction of cell death. The chain is Ras-related GTP-binding protein A from Bos taurus (Bovine).